The chain runs to 438 residues: Transposon Ty2-LR2 Gag polyprotein (438 aa).

3 stretches are compositionally biased toward polar residues: residues 1-11 (MESQQLHQNPH), 19-39 (ASVT…SASN), and 49-60 (KVNSQEETTPGT). Disordered stretches follow at residues 1 to 88 (MESQ…YQQH), 364 to 397 (KNVS…AKAH), and 418 to 438 (VSSQ…TERI). The tract at residues 295-397 (ENNINVSDRL…SSKPRAAKAH (103 aa)) is RNA-binding. Residues 369–381 (TSPNTTNTKVTTR) are compositionally biased toward low complexity.

Homotrimer.

It is found in the cytoplasm. In terms of biological role, capsid protein (CA) is the structural component of the virus-like particle (VLP), forming the shell that encapsulates the retrotransposons dimeric RNA genome. The particles are assembled from trimer-clustered units and there are holes in the capsid shells that allow for the diffusion of macromolecules. CA also has nucleocapsid-like chaperone activity, promoting primer tRNA(i)-Met annealing to the multipartite primer-binding site (PBS), dimerization of Ty2 RNA and initiation of reverse transcription. This is Transposon Ty2-LR2 Gag polyprotein (TY2A-LR2) from Saccharomyces cerevisiae (strain ATCC 204508 / S288c) (Baker's yeast).